Here is a 142-residue protein sequence, read N- to C-terminus: Crustacean hyperglycemic hormones (142 aa).

Residues 1-26 (MYSKTIPAMLAIITVAYLCALPHAHA) form the signal peptide. Gln-67 bears the Pyrrolidone carboxylic acid; partial mark. 3 disulfides stabilise this stretch: Cys-73/Cys-109, Cys-89/Cys-105, and Cys-92/Cys-118. A Valine amide modification is found at Val-138.

Belongs to the arthropod CHH/MIH/GIH/VIH hormone family. The N-terminus is blocked only in isoform CHH-II but not in isoform CHH-I. As to expression, produced by the medulla terminalis X-organ in the eyestalks and transported to the sinus gland where they are stored and released.

The protein resides in the secreted. Hormone found in the sinus gland of isopods and decapods which controls the blood sugar level. Has a secretagogue action over the amylase released from the midgut gland. May act as a stress hormone and may be involved in the control of molting and reproduction. The protein is Crustacean hyperglycemic hormones of Carcinus maenas (Common shore crab).